Consider the following 270-residue polypeptide: 4-hydroxy-tetrahydrodipicolinate reductase (270 aa).

NAD(+) is bound by residues 9-14 (GSGGRM) and glutamate 35. Arginine 36 provides a ligand contact to NADP(+). NAD(+)-binding positions include 99–101 (GTT) and 123–126 (ASNY). Histidine 156 (proton donor/acceptor) is an active-site residue. (S)-2,3,4,5-tetrahydrodipicolinate is bound at residue histidine 157. The active-site Proton donor is the lysine 160. 166–167 (GT) is a (S)-2,3,4,5-tetrahydrodipicolinate binding site.

Belongs to the DapB family.

The protein resides in the cytoplasm. The enzyme catalyses (S)-2,3,4,5-tetrahydrodipicolinate + NAD(+) + H2O = (2S,4S)-4-hydroxy-2,3,4,5-tetrahydrodipicolinate + NADH + H(+). It catalyses the reaction (S)-2,3,4,5-tetrahydrodipicolinate + NADP(+) + H2O = (2S,4S)-4-hydroxy-2,3,4,5-tetrahydrodipicolinate + NADPH + H(+). It functions in the pathway amino-acid biosynthesis; L-lysine biosynthesis via DAP pathway; (S)-tetrahydrodipicolinate from L-aspartate: step 4/4. Catalyzes the conversion of 4-hydroxy-tetrahydrodipicolinate (HTPA) to tetrahydrodipicolinate. The polypeptide is 4-hydroxy-tetrahydrodipicolinate reductase (Histophilus somni (strain 2336) (Haemophilus somnus)).